The sequence spans 192 residues: U1 small nuclear ribonucleoprotein C (192 aa).

The Matrin-type zinc finger occupies 4–36; that stretch reads YYCEYCDIYLTHSSPVGRRQHNQGRKHISAKIE. The segment at 118 to 192 is disordered; sequence PGANKYPNNN…FVNKNSEQPN (75 aa). Over residues 133-154 the composition is skewed to polar residues; that stretch reads RISNTPKPYNNYTNKPITNSPY. Residues 164 to 173 are compositionally biased toward low complexity; the sequence is NNENSNNFSN. The segment covering 174 to 192 has biased composition (polar residues); that stretch reads YQMNKDNSNFVNKNSEQPN.

Belongs to the U1 small nuclear ribonucleoprotein C family. U1 snRNP is composed of the 7 core Sm proteins B/B', D1, D2, D3, E, F and G that assemble in a heptameric protein ring on the Sm site of the small nuclear RNA to form the core snRNP, and at least 3 U1 snRNP-specific proteins U1-70K, U1-A and U1-C. U1-C interacts with U1 snRNA and the 5' splice-site region of the pre-mRNA.

It is found in the nucleus. Its function is as follows. Component of the spliceosomal U1 snRNP, which is essential for recognition of the pre-mRNA 5' splice-site and the subsequent assembly of the spliceosome. U1-C is directly involved in initial 5' splice-site recognition for both constitutive and regulated alternative splicing. The interaction with the 5' splice-site seems to precede base-pairing between the pre-mRNA and the U1 snRNA. Stimulates commitment or early (E) complex formation by stabilizing the base pairing of the 5' end of the U1 snRNA and the 5' splice-site region. This Plasmodium chabaudi chabaudi protein is U1 small nuclear ribonucleoprotein C.